Reading from the N-terminus, the 860-residue chain is Paladin (860 aa).

The tract at residues 1-24 (MGTTASAAPQATLHERLHSDSMTD) is disordered. A lipid anchor (N-myristoyl glycine) is attached at Gly-2. Residues 13 to 24 (LHERLHSDSMTD) show a composition bias toward basic and acidic residues.

The protein belongs to the paladin family.

It localises to the cytoplasm. The protein localises to the cytosol. In Danio rerio (Zebrafish), this protein is Paladin (pald1).